Consider the following 210-residue polypeptide: Large ribosomal subunit protein uL3 (210 aa).

Belongs to the universal ribosomal protein uL3 family. Part of the 50S ribosomal subunit. Forms a cluster with proteins L14 and L19.

Its function is as follows. One of the primary rRNA binding proteins, it binds directly near the 3'-end of the 23S rRNA, where it nucleates assembly of the 50S subunit. This is Large ribosomal subunit protein uL3 from Caldicellulosiruptor bescii (strain ATCC BAA-1888 / DSM 6725 / KCTC 15123 / Z-1320) (Anaerocellum thermophilum).